We begin with the raw amino-acid sequence, 70 residues long: Translation initiation factor IF-1 (70 aa).

The S1-like domain maps to 1 to 70 (MKNDKLFLTG…LKLGRITQRK (70 aa)).

This sequence belongs to the IF-1 family. In terms of assembly, component of the 30S ribosomal translation pre-initiation complex which assembles on the 30S ribosome in the order IF-2 and IF-3, IF-1 and N-formylmethionyl-tRNA(fMet); mRNA recruitment can occur at any time during PIC assembly.

The protein localises to the cytoplasm. Functionally, one of the essential components for the initiation of protein synthesis. Stabilizes the binding of IF-2 and IF-3 on the 30S subunit to which N-formylmethionyl-tRNA(fMet) subsequently binds. Helps modulate mRNA selection, yielding the 30S pre-initiation complex (PIC). Upon addition of the 50S ribosomal subunit IF-1, IF-2 and IF-3 are released leaving the mature 70S translation initiation complex. The protein is Translation initiation factor IF-1 of Mycoplasma genitalium (strain ATCC 33530 / DSM 19775 / NCTC 10195 / G37) (Mycoplasmoides genitalium).